The chain runs to 560 residues: CTP synthase (560 aa).

An amidoligase domain region spans residues 1–272 (MSIGDVCSAR…DTQILSHFGM (272 aa)). Residue S20 coordinates CTP. Position 20 (S20) interacts with UTP. Residues 21–26 (SLGKGL) and D78 each bind ATP. Positions 78 and 146 each coordinate Mg(2+). CTP-binding positions include 153–155 (DIE), 193–198 (KTKPTQ), and K229. UTP contacts are provided by residues 193-198 (KTKPTQ) and K229. A Glutamine amidotransferase type-1 domain is found at 297–539 (TIAIIGKYTK…VQNVLQIKQR (243 aa)). Position 356 (G356) interacts with L-glutamine. The Nucleophile; for glutamine hydrolysis role is filled by C383. L-glutamine contacts are provided by residues 384–387 (MGMQ), E407, and R467. Active-site residues include H512 and E514.

It belongs to the CTP synthase family. As to quaternary structure, homotetramer.

The enzyme catalyses UTP + L-glutamine + ATP + H2O = CTP + L-glutamate + ADP + phosphate + 2 H(+). It catalyses the reaction L-glutamine + H2O = L-glutamate + NH4(+). It carries out the reaction UTP + NH4(+) + ATP = CTP + ADP + phosphate + 2 H(+). Its pathway is pyrimidine metabolism; CTP biosynthesis via de novo pathway; CTP from UDP: step 2/2. Its activity is regulated as follows. Allosterically activated by GTP, when glutamine is the substrate; GTP has no effect on the reaction when ammonia is the substrate. The allosteric effector GTP functions by stabilizing the protein conformation that binds the tetrahedral intermediate(s) formed during glutamine hydrolysis. Inhibited by the product CTP, via allosteric rather than competitive inhibition. Functionally, catalyzes the ATP-dependent amination of UTP to CTP with either L-glutamine or ammonia as the source of nitrogen. Regulates intracellular CTP levels through interactions with the four ribonucleotide triphosphates. This Anaplasma marginale (strain Florida) protein is CTP synthase.